A 123-amino-acid polypeptide reads, in one-letter code: Fluoride-specific ion channel FluC (123 aa).

4 helical membrane passes run 6–26 (VALV…LSGV), 38–58 (LLVN…IFWG), 68–88 (FLGT…YETF), and 100–120 (LLNI…GFVL). Residues G75 and S78 each contribute to the Na(+) site.

It belongs to the fluoride channel Fluc/FEX (TC 1.A.43) family.

It localises to the cell membrane. The enzyme catalyses fluoride(in) = fluoride(out). Its activity is regulated as follows. Na(+) is not transported, but it plays an essential structural role and its presence is essential for fluoride channel function. Its function is as follows. Fluoride-specific ion channel. Important for reducing fluoride concentration in the cell, thus reducing its toxicity. This chain is Fluoride-specific ion channel FluC, found in Pyrococcus furiosus (strain ATCC 43587 / DSM 3638 / JCM 8422 / Vc1).